A 257-amino-acid polypeptide reads, in one-letter code: Phosphonates import ATP-binding protein PhnC 1 (257 aa).

Residues Ile-2–Leu-246 form the ABC transporter domain. Gly-35–Ser-42 serves as a coordination point for ATP.

The protein belongs to the ABC transporter superfamily. Phosphonates importer (TC 3.A.1.9.1) family. As to quaternary structure, the complex is composed of two ATP-binding proteins (PhnC), two transmembrane proteins (PhnE) and a solute-binding protein (PhnD).

It is found in the cell membrane. It carries out the reaction phosphonate(out) + ATP + H2O = phosphonate(in) + ADP + phosphate + H(+). Part of the ABC transporter complex PhnCDE involved in phosphonates import. Responsible for energy coupling to the transport system. The protein is Phosphonates import ATP-binding protein PhnC 1 of Halalkalibacterium halodurans (strain ATCC BAA-125 / DSM 18197 / FERM 7344 / JCM 9153 / C-125) (Bacillus halodurans).